A 260-amino-acid chain; its full sequence is Ras-related protein Rab-32B (260 aa).

A disordered region spans residues 11 to 50 (FDTDPDVSTDSNYNNNNNSNNNNSIISNSNNNNNNNNNNV). The span at 21-49 (SNYNNNNNSNNNNSIISNSNNNNNNNNNN) shows a compositional bias: low complexity. Position 66-73 (66-73 (GDYAVGKS)) interacts with GTP. The short motif at 88–96 (YKLTIGVDF) is the Effector region element. GTP-binding positions include 115-119 (DIAGH) and 177-180 (NKSD). A disordered region spans residues 231-260 (TNHPPKPEEDTLELTKTNGEKSDDSKSCCK). The segment covering 248–260 (NGEKSDDSKSCCK) has biased composition (basic and acidic residues). 2 S-geranylgeranyl cysteine lipidation sites follow: C258 and C259.

Belongs to the small GTPase superfamily. Rab family.

The chain is Ras-related protein Rab-32B (rab32B) from Dictyostelium discoideum (Social amoeba).